A 192-amino-acid polypeptide reads, in one-letter code: Ion-translocating oxidoreductase complex subunit B (192 aa).

The tract at residues 1–26 (MNAFWIAVAAVSLLGLAFGAILGYAS) is hydrophobic. A 4Fe-4S domain is found at 32–91 (EDDPVVEKIDEILPQSQCGQCGYPGCRPYAEAISCNGEKINRCAPGGEAVMLKIAELLNV). [4Fe-4S] cluster-binding residues include C49, C52, C57, C74, C117, C120, C123, C127, C147, C150, C153, and C157. 4Fe-4S ferredoxin-type domains are found at residues 108 to 137 (MVAVIDENNCIGCTKCIQACPVDAIVGATR) and 138 to 167 (AMHTVMSDLCTGCNLCVDPCPTHCISLQPV).

The protein belongs to the 4Fe4S bacterial-type ferredoxin family. RnfB subfamily. In terms of assembly, the complex is composed of six subunits: RsxA, RsxB, RsxC, RsxD, RsxE and RsxG. [4Fe-4S] cluster is required as a cofactor.

The protein resides in the cell inner membrane. Its function is as follows. Part of a membrane-bound complex that couples electron transfer with translocation of ions across the membrane. Required to maintain the reduced state of SoxR. This Escherichia coli O6:H1 (strain CFT073 / ATCC 700928 / UPEC) protein is Ion-translocating oxidoreductase complex subunit B.